Consider the following 505-residue polypeptide: Trans-cinnamate 4-monooxygenase (505 aa).

Residues 3–23 (LLLLEKTLLGLFLAAVVAIVV) traverse the membrane as a helical segment. (E)-cinnamate is bound by residues 213–218 (RSRLAQ) and alanine 306. A heme-binding site is contributed by cysteine 447.

Belongs to the cytochrome P450 family. Heme is required as a cofactor.

It localises to the membrane. It catalyses the reaction (E)-cinnamate + reduced [NADPH--hemoprotein reductase] + O2 = (E)-4-coumarate + oxidized [NADPH--hemoprotein reductase] + H2O + H(+). Its pathway is phenylpropanoid metabolism; trans-4-coumarate biosynthesis; trans-4-coumarate from trans-cinnamate: step 1/1. Functionally, catalyzes the first oxidative step of the phenylpropanoid pathway in higher plants by transforming trans-cinnamate into p-coumarate. The compounds formed by this pathway are essential components for lignification, pollination, and defense against ultraviolet light, predators and pathogens. The protein is Trans-cinnamate 4-monooxygenase (CYP73A2) of Vigna radiata var. radiata (Mung bean).